We begin with the raw amino-acid sequence, 422 residues long: MEDSKPLSVSEVTRIIKNLISGSKDLKNIWVRGEISNYSKASSGHIYFSLKDAGSLIRCTFFNYSNKNYSGKPLSDGKEIQVYGTITLYEAGGSYNLNVTRVEELGQGDILLQIEKLKQKLAVEGIFDPEKKRRIPSFPKTLGIATSPTGAAIEDIIKISRSRFPGINILIAPCIVQGEDAPDSIVAAIEELNHPNWKVDVIIAGRGGGSFEDLMAFNDEKVVRAYANSRIPIISAVGHQTDVLLSDFAADHFTPTPTAAAEYAIPKEEDVLQFLSQLEGRIKSSLVTKISSNRDRLRLLSGKFIFKEPMQLLNQRSQRVDEIGIRLQKALSNKLNLARVRLERYQNLTSRIQNILFHKKQKAEFWTSKVEDLSPAATMKRGYSILRNENGKIIRSPEETKPEEELQVLLSGGTMQVIRKGK.

This sequence belongs to the XseA family. In terms of assembly, heterooligomer composed of large and small subunits.

The protein resides in the cytoplasm. It catalyses the reaction Exonucleolytic cleavage in either 5'- to 3'- or 3'- to 5'-direction to yield nucleoside 5'-phosphates.. In terms of biological role, bidirectionally degrades single-stranded DNA into large acid-insoluble oligonucleotides, which are then degraded further into small acid-soluble oligonucleotides. In Leptospira interrogans serogroup Icterohaemorrhagiae serovar copenhageni (strain Fiocruz L1-130), this protein is Exodeoxyribonuclease 7 large subunit.